We begin with the raw amino-acid sequence, 221 residues long: MVDLRYGSGNIFNEKVHGIGIIALGSFLENHGSALPIDTDAKIASYIALNVSIITGAKFLGVVLPSTEYSYVKHGIHDSIKDVINYIKYLVENGRKIGINKFLIINCHGGNTLIKDEISKLNHENCFIRMENVCLTHAATDEVSLGYAVGILSEDKMKTHDPEIYEEIGMVGLKEAREKNEAIDLEARSVEENGVFLDRTHGRFLLNELINNYVEIVRNMI.

Fe cation contacts are provided by glutamate 29, histidine 31, aspartate 40, and histidine 108.

The protein belongs to the creatininase superfamily. FAPy deformylase family. As to quaternary structure, homodimer. Requires Fe(2+) as cofactor. It depends on Zn(2+) as a cofactor.

The enzyme catalyses 2-amino-5-formylamino-6-(5-phospho-D-ribosylamino)pyrimidin-4(3H)-one + H2O = 2,5-diamino-6-(1-D-ribosylamino)pyrimidin-4(3H)-one 5'-phosphate + formate + H(+). The protein operates within cofactor biosynthesis; coenzyme F420 biosynthesis. It participates in cofactor biosynthesis; riboflavin biosynthesis. Functionally, catalyzes the hydrolysis of the formamide of 2-amino-5-formylamino-6-ribosylamino-4(3H)-pyrimidinone 5'-monophosphate (FAPy) to form 2,5-diamino-6-ribosylamino-4(3H)-pyrimidinone 5'-phosphate (APy). The protein is 2-amino-5-formylamino-6-ribosylaminopyrimidin-4(3H)-one 5'-monophosphate deformylase of Methanococcus maripaludis (strain C7 / ATCC BAA-1331).